Consider the following 88-residue polypeptide: UPF0250 protein Sputcn32_2874 (88 aa).

This sequence belongs to the UPF0250 family.

The protein is UPF0250 protein Sputcn32_2874 of Shewanella putrefaciens (strain CN-32 / ATCC BAA-453).